Consider the following 399-residue polypeptide: CCA-adding enzyme (399 aa).

Positions 32 and 35 each coordinate ATP. CTP is bound by residues Gly32 and Arg35. Mg(2+)-binding residues include Asp45 and Asp47. ATP is bound by residues Arg116, Asp159, Arg162, Arg165, and Arg168. Residues Arg116, Asp159, Arg162, Arg165, and Arg168 each coordinate CTP.

Belongs to the tRNA nucleotidyltransferase/poly(A) polymerase family. Bacterial CCA-adding enzyme type 3 subfamily. As to quaternary structure, homodimer. Mg(2+) serves as cofactor.

The enzyme catalyses a tRNA precursor + 2 CTP + ATP = a tRNA with a 3' CCA end + 3 diphosphate. It carries out the reaction a tRNA with a 3' CCA end + 2 CTP + ATP = a tRNA with a 3' CCACCA end + 3 diphosphate. In terms of biological role, catalyzes the addition and repair of the essential 3'-terminal CCA sequence in tRNAs without using a nucleic acid template. Adds these three nucleotides in the order of C, C, and A to the tRNA nucleotide-73, using CTP and ATP as substrates and producing inorganic pyrophosphate. tRNA 3'-terminal CCA addition is required both for tRNA processing and repair. Also involved in tRNA surveillance by mediating tandem CCA addition to generate a CCACCA at the 3' terminus of unstable tRNAs. While stable tRNAs receive only 3'-terminal CCA, unstable tRNAs are marked with CCACCA and rapidly degraded. The sequence is that of CCA-adding enzyme from Streptococcus sanguinis (strain SK36).